A 173-amino-acid chain; its full sequence is MGDVKMDKELLHKKIKKDIEDLINNHPPERTLGNLIPLSIFQAVRIGVLTAGCGIEAIIYNIGKDIGREVISRYVDRDNLLESFAEILKKAKIGILEVKKVEENEMILILKDCISCHNVPNVGTTLCHFEAGLIAGTLEKKLRRKVNAVETKCCGKGDEYCEFLVKIEDKLYW.

This sequence belongs to the M.jannaschii MJ0150/MJ0739/MJ0745/MJ1460/MJ1642 family.

This is an uncharacterized protein from Methanocaldococcus jannaschii (strain ATCC 43067 / DSM 2661 / JAL-1 / JCM 10045 / NBRC 100440) (Methanococcus jannaschii).